We begin with the raw amino-acid sequence, 658 residues long: MTSLAAGKPAPLGASYDGKGVNFALFSAHAERVELCVFDEQGNEQRVDLPARSGDIWHGWLDAAGPGLRYGYRVHGPWDPAQGHRFNPAKLLLDPCAYRVEGDLPDDERLHGGMWEPDHRDSAAIAPKSQVVDLHYDWRGDKPPRTPWGETVIYEAHVKGLTLLHPQLPEAIRGTYKALGHPVMIAYFKSLGISALELLPVAQFASEPRLQRMGLSNYWGYNPLAWFALDPRYASDPARALDEFRDAVKALHAAGIEVILDIVLNHSAEIDLEGPTVSLRGIDNRSYYWVREDGDYHNWTGCGNTLNLSHPGVVEWARQCLRFWVDECHVDGFRFDLASVMGRTPEFRQDAPLFEAIRRDSVLSQVKLIAEPWDIGPGGYQVANFPPLFAEWNDHFRDISRRFWLQQNVSLGDFAQRFAASSDLFARDGKRPSATVNLVTAHDGFTLRDCVCFNQKHNEANGEENRDGTNNNYSNNHGIEGLDANLAVIERRRASVHALLTTLLLAQGTPMLLAGDEQGHSQHGNNNAYCQDNALTWLDWRQANPGLTAFTAALIHLRRRIPALTRNRWWQEGDGNVRWLNRNAQPLTAGEWQLGAACMQIQLSDRWLLTLNATAEVVDMVLPEGEWRAVPPFAGEDNPVIMAVWHGPAHGVCVFQRS.

Catalysis depends on D336, which acts as the Nucleophile. Residue E371 is the Proton donor of the active site.

It belongs to the glycosyl hydrolase 13 family.

It catalyses the reaction Hydrolysis of (1-&gt;6)-alpha-D-glucosidic linkages to branches with degrees of polymerization of three or four glucose residues in limit dextrin.. The protein operates within glycan degradation; glycogen degradation. Its function is as follows. Removes maltotriose and maltotetraose chains that are attached by 1,6-alpha-linkage to the limit dextrin main chain, generating a debranched limit dextrin. The chain is Glycogen debranching enzyme from Klebsiella pneumoniae (strain 342).